The primary structure comprises 629 residues: Translation initiation factor IF-2 (629 aa).

The segment at M1–S20 is disordered. The tr-type G domain maps to H127–K297. Residues G136–T143 form a G1 region. G136–T143 contacts GTP. The G2 stretch occupies residues G161–A165. The tract at residues D183–G186 is G3. GTP-binding positions include D183 to H187 and N237 to D240. Residues N237 to D240 are G4. The G5 stretch occupies residues S273–K275.

The protein belongs to the TRAFAC class translation factor GTPase superfamily. Classic translation factor GTPase family. IF-2 subfamily.

It localises to the cytoplasm. One of the essential components for the initiation of protein synthesis. Protects formylmethionyl-tRNA from spontaneous hydrolysis and promotes its binding to the 30S ribosomal subunits. Also involved in the hydrolysis of GTP during the formation of the 70S ribosomal complex. The protein is Translation initiation factor IF-2 of Mesoplasma florum (strain ATCC 33453 / NBRC 100688 / NCTC 11704 / L1) (Acholeplasma florum).